Reading from the N-terminus, the 60-residue chain is Large ribosomal subunit protein uL30 (60 aa).

The protein belongs to the universal ribosomal protein uL30 family. Part of the 50S ribosomal subunit.

The protein is Large ribosomal subunit protein uL30 of Streptococcus pneumoniae (strain Hungary19A-6).